Consider the following 181-residue polypeptide: Oligoribonuclease (181 aa).

An Exonuclease domain is found at 8–171 (LIWVDLEMTG…DDIRESIAEL (164 aa)). Residue tyrosine 129 is part of the active site.

It belongs to the oligoribonuclease family.

It localises to the cytoplasm. In terms of biological role, 3'-to-5' exoribonuclease specific for small oligoribonucleotides. The protein is Oligoribonuclease of Vibrio campbellii (strain ATCC BAA-1116).